The chain runs to 391 residues: Acridone synthase 2 (391 aa).

The active site involves Cys164.

The protein belongs to the thiolase-like superfamily. Chalcone/stilbene synthases family. Homodimer.

The catalysed reaction is N-methylanthraniloyl-CoA + 3 malonyl-CoA + 3 H(+) = 1,3-dihydroxy-N-methylacridone + 3 CO2 + 4 CoA + H2O. The polypeptide is Acridone synthase 2 (ACS2) (Ruta graveolens (Common rue)).